Reading from the N-terminus, the 435-residue chain is Membrane-bound ghrelin O-acyltransferase MBOAT4 (435 aa).

Residues 1–5 (MDWLQ) are Lumenal-facing. A helical transmembrane segment spans residues 6 to 26 (LFFLHPLSFYQGAAFPFALLF). Topologically, residues 27-40 (NYLCILDTFSTRAR) are cytoplasmic. A helical membrane pass occupies residues 41-56 (YLFLLAGGGVLAFAAM). Residues 57-59 (GPY) are Lumenal-facing. A helical membrane pass occupies residues 60–76 (SLLIFIPALCAVALVSF). Topologically, residues 77-82 (LSPQEV) are cytoplasmic. The chain crosses the membrane as a helical span at residues 83-101 (HRLTFFFQMGWQTLCHLGL). Residues 102–120 (HYTEYYLGEPPPVRFYITL) lie on the Lumenal side of the membrane. Residues 121–136 (SSLMLLTQRVTSLSLD) form a helical membrane-spanning segment. Topologically, residues 137 to 206 (ICEGKVEAPR…YPSISFRALT (70 aa)) are cytoplasmic. Residues 207-227 (WRGLQILGLECLKVALRSAVS) form a helical membrane-spanning segment. Residues 228–240 (AGAGLDDCQRLEC) lie on the Lumenal side of the membrane. A helical transmembrane segment spans residues 241–261 (IYLMWSTAWLFKLTYYSHWIL). Residues 262–324 (DDSLLHAAGF…RRLVFRKSRR (63 aa)) lie on the Cytoplasmic side of the membrane. Catalysis depends on residues Asn307 and His338. Residues 325-338 (WPLLQTFAFSAWWH) form a helical membrane-spanning segment. The Lumenal portion of the chain corresponds to 339–340 (GL). The helical transmembrane segment at 341-357 (HPGQVFGFLCWSVMVKA) threads the bilayer. At 358–376 (DYLIHTFANVCIRSWPLRL) the chain is on the cytoplasmic side. The chain crosses the membrane as a helical span at residues 377-397 (LYRALTWAHTQLIIAYIMLAV). The Lumenal portion of the chain corresponds to 398-407 (EGRSLSSLCQ). A helical membrane pass occupies residues 408-428 (LCCSYNSLFPVMYGLLLFLLA). Residues 429-435 (ERKDKRN) lie on the Cytoplasmic side of the membrane.

This sequence belongs to the membrane-bound acyltransferase family. In terms of assembly, monomer. Not glycosylated. In terms of tissue distribution, highly expressed in stomach and pancreas. Lower expression in small intestine and colon. Very low expression in testis.

It is found in the endoplasmic reticulum membrane. It catalyses the reaction octanoyl-CoA + L-seryl-[protein] = O-octanoyl-L-seryl-[protein] + CoA. It carries out the reaction hexanoyl-CoA + L-seryl-[protein] = O-hexanoyl-L-seryl-[protein] + CoA. The enzyme catalyses decanoyl-CoA + L-seryl-[protein] = O-decanoyl-L-seryl-[protein] + CoA. The catalysed reaction is L-seryl-[protein] + acetyl-CoA = O-acetyl-L-seryl-[protein] + CoA. It catalyses the reaction L-seryl-[protein] + butanoyl-CoA = O-butanoyl-L-seryl-[protein] + CoA. It carries out the reaction pentanoyl-CoA + L-seryl-[protein] = O-pentanoyl-L-seryl-[protein] + CoA. The enzyme catalyses heptanoyl-CoA + L-seryl-[protein] = O-heptanoyl-L-seryl-[protein] + CoA. The catalysed reaction is nonanoyl-CoA + L-seryl-[protein] = O-nonanoyl-L-seryl-[protein] + CoA. It catalyses the reaction L-seryl-[protein] + dodecanoyl-CoA = O-dodecanoyl-L-seryl-[protein] + CoA. It carries out the reaction L-seryl-[protein] + tetradecanoyl-CoA = O-tetradecanoyl-L-seryl-[protein] + CoA. The enzyme catalyses a fatty acyl-CoA + L-seryl-[protein] = O-fatty acyl-L-seryl-[protein] + CoA. Inhibited by 1-[2-cyano-3,12-dioxooleana-1,9(11)- dien-28-oyl]ethylamide (CDDO-EA) with an IC(50) of 60 uM. Inhibited by Fe3+ and Cu2+ and the O-acyltransferase activity is completely blocked over 5 mM Fe3+ and 0.5 mM Cu2+. Its function is as follows. Catalyzes ghrelin acylation at 'Ser-3' using preferentially octanoyl-CoA, hexanoyl-CoA and decanoyl-CoA as acyl-CoA donors leading to ghrelin activity. In vitro also uses acyl-CoA donors of different lengths from short-chain (C2) to long-chain fatty acids (C16) knowing that acyl-CoA donors from butanoyl-CoA (C4) to dodecanoyl-CoA (C12) are more efficient compared to longer acyl-CoA donors, such as myristoyl-CoA (C14) and palmitoyl-CoA (C16) that are not efficient. Inactive octanoyltransferase activity. The protein is Membrane-bound ghrelin O-acyltransferase MBOAT4 of Mus musculus (Mouse).